The primary structure comprises 248 residues: Methyl-coenzyme M reductase subunit gamma (248 aa).

Arg121 serves as a coordination point for coenzyme M.

The protein belongs to the methyl-coenzyme M reductase gamma subunit family. As to quaternary structure, MCR is a hexamer of two alpha, two beta, and two gamma chains, forming a dimer of heterotrimers. Coenzyme F430 is required as a cofactor.

The protein localises to the cytoplasm. It catalyses the reaction coenzyme B + methyl-coenzyme M = methane + coenzyme M-coenzyme B heterodisulfide. Its pathway is one-carbon metabolism; methyl-coenzyme M reduction; methane from methyl-coenzyme M: step 1/1. Its function is as follows. Component of the methyl-coenzyme M reductase (MCR) I that catalyzes the reductive cleavage of methyl-coenzyme M (CoM-S-CH3 or 2-(methylthio)ethanesulfonate) using coenzyme B (CoB or 7-mercaptoheptanoylthreonine phosphate) as reductant which results in the production of methane and the mixed heterodisulfide of CoB and CoM (CoM-S-S-CoB). This is the final step in methanogenesis. This chain is Methyl-coenzyme M reductase subunit gamma (mcrG), found in Methanosarcina barkeri (strain Fusaro / DSM 804).